We begin with the raw amino-acid sequence, 313 residues long: Porphobilinogen deaminase (313 aa).

Cys-241 carries the S-(dipyrrolylmethanemethyl)cysteine modification.

This sequence belongs to the HMBS family. Monomer. It depends on dipyrromethane as a cofactor.

The enzyme catalyses 4 porphobilinogen + H2O = hydroxymethylbilane + 4 NH4(+). The protein operates within porphyrin-containing compound metabolism; protoporphyrin-IX biosynthesis; coproporphyrinogen-III from 5-aminolevulinate: step 2/4. It participates in porphyrin-containing compound metabolism; chlorophyll biosynthesis. Its function is as follows. Tetrapolymerization of the monopyrrole PBG into the hydroxymethylbilane pre-uroporphyrinogen in several discrete steps. This Chlorobium luteolum (strain DSM 273 / BCRC 81028 / 2530) (Pelodictyon luteolum) protein is Porphobilinogen deaminase.